A 536-amino-acid chain; its full sequence is Apolipoprotein N-acyltransferase (536 aa).

6 consecutive transmembrane segments (helical) span residues 34-54 (PLWW…RPGA), 64-84 (ALIG…WLFI), 89-109 (YGAL…AFLA), 129-149 (GAAL…GSLW), 172-192 (YVGV…CVQW), and 199-219 (HWPM…AAVQ). A CN hydrolase domain is found at 244–487 (LQGNIAQDEK…RGVLRGQVHG (244 aa)). The active-site Proton acceptor is Glu-283. Lys-345 is a catalytic residue. Residue Cys-395 is the Nucleophile of the active site. A helical membrane pass occupies residues 503-523 (WWVARWGLWPLWALAALALAW).

This sequence belongs to the CN hydrolase family. Apolipoprotein N-acyltransferase subfamily.

Its subcellular location is the cell inner membrane. The catalysed reaction is N-terminal S-1,2-diacyl-sn-glyceryl-L-cysteinyl-[lipoprotein] + a glycerophospholipid = N-acyl-S-1,2-diacyl-sn-glyceryl-L-cysteinyl-[lipoprotein] + a 2-acyl-sn-glycero-3-phospholipid + H(+). It participates in protein modification; lipoprotein biosynthesis (N-acyl transfer). In terms of biological role, catalyzes the phospholipid dependent N-acylation of the N-terminal cysteine of apolipoprotein, the last step in lipoprotein maturation. The sequence is that of Apolipoprotein N-acyltransferase from Verminephrobacter eiseniae (strain EF01-2).